A 403-amino-acid polypeptide reads, in one-letter code: Aspartic protease pepA (403 aa).

An N-terminal signal peptide occupies residues 1–20 (MVLITQLGAALAVFSALTVA). The propeptide at 21 to 67 (APTKGKARFSAPQVGIPKKAKHHPAAAYARALHKFGMKIPKAVSDAA) is activation peptide. A Peptidase A1 domain is found at 82–400 (YVTQVTVGGS…DTQGPRIGFA (319 aa)). Residue Asp98 is part of the active site. A glycan (N-linked (GlcNAc...) asparagine) is linked at Asn270. Asp293 is an active-site residue. An intrachain disulfide couples Cys329 to Cys362.

It belongs to the peptidase A1 family. As to quaternary structure, monomer.

Its subcellular location is the secreted. Secreted aspartic endopeptidase that allows assimilation of proteinaceous substrates. The scissile peptide bond is attacked by a nucleophilic water molecule activated by two aspartic residues in the active site. Shows a broad primary substrate specificity. Favors hydrophobic residues at the P1 and P1' positions. The polypeptide is Aspartic protease pepA (Arthroderma gypseum (strain ATCC MYA-4604 / CBS 118893) (Microsporum gypseum)).